Reading from the N-terminus, the 129-residue chain is ATP synthase epsilon chain (129 aa).

Belongs to the ATPase epsilon chain family. In terms of assembly, F-type ATPases have 2 components, CF(1) - the catalytic core - and CF(0) - the membrane proton channel. CF(1) has five subunits: alpha(3), beta(3), gamma(1), delta(1), epsilon(1). CF(0) has three main subunits: a, b and c.

The protein resides in the cell inner membrane. Produces ATP from ADP in the presence of a proton gradient across the membrane. This chain is ATP synthase epsilon chain, found in Campylobacter concisus (strain 13826).